We begin with the raw amino-acid sequence, 102 residues long: Putative pterin-4-alpha-carbinolamine dehydratase (102 aa).

The protein belongs to the pterin-4-alpha-carbinolamine dehydratase family.

It catalyses the reaction (4aS,6R)-4a-hydroxy-L-erythro-5,6,7,8-tetrahydrobiopterin = (6R)-L-erythro-6,7-dihydrobiopterin + H2O. The chain is Putative pterin-4-alpha-carbinolamine dehydratase from Burkholderia cenocepacia (strain HI2424).